We begin with the raw amino-acid sequence, 1711 residues long: Reverse gyrase (1711 aa).

An RG N-terminal-type zinc finger spans residues 1–39 (MKAVYREMCPNCWGRISDERLVMRNPCEECLDEPVHADS). Residues Cys9, Cys12, Cys27, and Cys30 each contribute to the Zn(2+) site. Residues Gln89 and 106-113 (APTGMGKS) each bind ATP. The Helicase ATP-binding domain maps to 93 to 256 (VKRLLKGRSF…RLKKQMSRYL (164 aa)). The DEAD box signature appears at 213–216 (DDVD). Positions 638–1711 (DLVRSALMIV…YSEIQRYVSG (1074 aa)) are topoisomerase I. In terms of domain architecture, Toprim spans 642–805 (SALMIVESPN…NIKRIEFHEV (164 aa)). Position 648 (Glu648) interacts with Mg(2+). The RG C-terminal-type zinc-finger motif lies at 722–751 (LKRCRDCGHQFVDWEKKGVCPRCGSTNVRD). Cys725, Cys728, Cys741, and Cys744 together coordinate Zn(2+). Asp774 serves as a coordination point for Mg(2+). The Topo IA-type catalytic domain maps to 821 to 1709 (NENRVNAQIV…ELYSEIQRYV (889 aa)). In terms of domain architecture, DOD-type homing endonuclease spans 1160–1287 (VFGLVLGDGT…LSVYLYQIGI (128 aa)). Residue Tyr1452 is the O-(5'-phospho-DNA)-tyrosine intermediate of the active site.

In the N-terminal section; belongs to the DEAD box helicase family. DDVD subfamily. The protein in the C-terminal section; belongs to the type IA topoisomerase family. Monomer. Zn(2+) is required as a cofactor. It depends on Mg(2+) as a cofactor. This protein undergoes a protein self splicing that involves a post-translational excision of the intervening region (intein) followed by peptide ligation.

The protein resides in the cytoplasm. The enzyme catalyses ATP + H2O = ADP + phosphate + H(+). In terms of biological role, modifies the topological state of DNA by introducing positive supercoils in an ATP-dependent process, increasing the linking number in steps of +1. Binds to single-stranded DNA, transiently cleaves and then rejoins the ends, introducing a positive supercoil in the process. The scissile phosphodiester is attacked by the catalytic tyrosine of the enzyme, resulting in the formation of a DNA-(5'-phosphotyrosyl)-enzyme intermediate. Probably involved in rewinding DNA strands in regions of the chromosome that have opened up to allow replication, transcription, DNA repair and/or for DNA protection. This chain is Reverse gyrase, found in Thermococcus kodakarensis (strain ATCC BAA-918 / JCM 12380 / KOD1) (Pyrococcus kodakaraensis (strain KOD1)).